Here is a 101-residue protein sequence, read N- to C-terminus: Small ribosomal subunit protein uS14A (101 aa).

The interval 31 to 74 (IRKPSTPEADRAAAQAALQRLPRDASPVRLRNRDAADGRPRGHL) is disordered. Residues 61-70 (RNRDAADGRP) are compositionally biased toward basic and acidic residues.

This sequence belongs to the universal ribosomal protein uS14 family. Part of the 30S ribosomal subunit. Contacts proteins S3 and S10.

Binds 16S rRNA, required for the assembly of 30S particles and may also be responsible for determining the conformation of the 16S rRNA at the A site. The chain is Small ribosomal subunit protein uS14A from Nocardia farcinica (strain IFM 10152).